A 472-amino-acid chain; its full sequence is MSQRQFKVIIIGGSVTGLTLAHSLHKIGIDYVVLEKRDTVTPQEGASIGILPNGARILDQLGLYEAIEDEAPPLGATRIHFPDGFAFTSLYPKRMRHSFGYPIAFLERRQLLRILYDALPDKTRIHVNKTMSTIEHFTKDEITGARVLTKEGDVYEGDLIVGADGIHSQTRGEIWRRINSSKSAFKTAEEYSCCFGISKCVTGLIAGEQVMHMRNGRTLVVIPSKDEVVFWFLVEKLDRKYTYSEAPRFTIDDATALCSQVFTLPIGNNIKFEDVWNKREVVNMLSLEESCLSTWSTGRLVCIGDSIHKMTVNLGQGANCAIEDVAVLCNLLRNMCQLKSGTRPTEQEIDLLLRRFNKQHLSRVTQITNMSKLTVRVHARKGVLHRLVGRYVMPYFGAYFEARPFNMLADAASLDFIPLPKSSYPGWEKYSSKTRGNSRLLPLMFTLPLLYFGLSWIVGIYWKPGYLHAWNS.

The first 24 residues, 1 to 24 (MSQRQFKVIIIGGSVTGLTLAHSL), serve as a signal peptide directing secretion. Residues Glu-35, Gly-49, and Arg-108 each contribute to the FAD site. N-linked (GlcNAc...) asparagine glycans are attached at residues Asn-128 and Asn-179. Positions 305 and 318 each coordinate FAD. N-linked (GlcNAc...) asparagine glycosylation occurs at Asn-369. A helical transmembrane segment spans residues 440 to 460 (LLPLMFTLPLLYFGLSWIVGI).

This sequence belongs to the paxM FAD-dependent monooxygenase family. FAD serves as cofactor.

It localises to the membrane. It participates in secondary metabolite biosynthesis; terpenoid biosynthesis. Its function is as follows. FAD-dependent monooxygenase; part of the gene cluster that mediates the biosynthesis of the diterpenoid pyrones subglutinols A and B. The first step of the pathway is the synthesis of the alpha-pyrone moiety by the polyketide synthase dpmaA via condensation of one acetyl-CoA starter unit with 3 malonyl-CoA units and 2 methylations. The alpha-pyrone is then combined with geranylgeranyl pyrophosphate (GGPP) formed by the GGPP synthase dpmaD through the action of the prenyltransferase dpmaC to yield a linear alpha-pyrone diterpenoid. Subsequent steps in the diterpenoid pyrone biosynthetic pathway involve the decalin core formation, which is initiated by the epoxidation of the C10-C11 olefin by the FAD-dependent oxidoreductase dpmaE, and is followed by a cyclization cascade catalyzed by the terpene cyclase dpmaB. The dehydrogenase dpmaF is then involved in tetrahydrofuran (THF) ring formation at the C5 unit to complete the formation of subglutinols A and B. This chain is FAD-dependent monooxygenase dpmaE, found in Metarhizium anisopliae (Entomophthora anisopliae).